The chain runs to 382 residues: Succinyl-diaminopimelate desuccinylase (382 aa).

His-73 serves as a coordination point for Zn(2+). Asp-75 is a catalytic residue. Zn(2+) is bound at residue Asp-106. The Proton acceptor role is filled by Glu-140. Zn(2+) is bound by residues Glu-141, Glu-169, and His-355.

Belongs to the peptidase M20A family. DapE subfamily. As to quaternary structure, homodimer. Zn(2+) is required as a cofactor. The cofactor is Co(2+).

It catalyses the reaction N-succinyl-(2S,6S)-2,6-diaminopimelate + H2O = (2S,6S)-2,6-diaminopimelate + succinate. Its pathway is amino-acid biosynthesis; L-lysine biosynthesis via DAP pathway; LL-2,6-diaminopimelate from (S)-tetrahydrodipicolinate (succinylase route): step 3/3. Catalyzes the hydrolysis of N-succinyl-L,L-diaminopimelic acid (SDAP), forming succinate and LL-2,6-diaminopimelate (DAP), an intermediate involved in the bacterial biosynthesis of lysine and meso-diaminopimelic acid, an essential component of bacterial cell walls. In Saccharophagus degradans (strain 2-40 / ATCC 43961 / DSM 17024), this protein is Succinyl-diaminopimelate desuccinylase.